Here is a 345-residue protein sequence, read N- to C-terminus: Anthranilate phosphoribosyltransferase (345 aa).

5-phospho-alpha-D-ribose 1-diphosphate-binding positions include G84, 87 to 88 (GD), T92, 94 to 97 (NVTT), 112 to 120 (KHGNRSVSS), and S124. G84 lines the anthranilate pocket. T96 lines the Mg(2+) pocket. N115 is a binding site for anthranilate. Residue R170 participates in anthranilate binding. Positions 228 and 229 each coordinate Mg(2+).

Belongs to the anthranilate phosphoribosyltransferase family. As to quaternary structure, homodimer. The cofactor is Mg(2+).

The catalysed reaction is N-(5-phospho-beta-D-ribosyl)anthranilate + diphosphate = 5-phospho-alpha-D-ribose 1-diphosphate + anthranilate. It participates in amino-acid biosynthesis; L-tryptophan biosynthesis; L-tryptophan from chorismate: step 2/5. In terms of biological role, catalyzes the transfer of the phosphoribosyl group of 5-phosphorylribose-1-pyrophosphate (PRPP) to anthranilate to yield N-(5'-phosphoribosyl)-anthranilate (PRA). This chain is Anthranilate phosphoribosyltransferase, found in Corynebacterium aurimucosum (strain ATCC 700975 / DSM 44827 / CIP 107346 / CN-1) (Corynebacterium nigricans).